Here is a 185-residue protein sequence, read N- to C-terminus: Celestoxin (185 aa).

An N-terminal signal peptide occupies residues 1 to 20; sequence MKFIAAVLLVALLCPKDSTS. The propeptide occupies 21-148; it reads LASRLSGLLG…GLPVALPVSV (128 aa).

As to expression, expressed by the mandibular venom gland.

It is found in the secreted. Its function is as follows. Has a hypotensive activity. The chain is Celestoxin from Caribicus warreni (Haitian giant galliwasp).